Reading from the N-terminus, the 455-residue chain is Glutamyl-tRNA reductase (455 aa).

Substrate is bound by residues 49-52 (TCNR), serine 109, 114-116 (ETQ), and glutamine 120. Cysteine 50 acts as the Nucleophile in catalysis. NADP(+) is bound at residue 189 to 194 (GAGKMG).

It belongs to the glutamyl-tRNA reductase family. As to quaternary structure, homodimer.

It carries out the reaction (S)-4-amino-5-oxopentanoate + tRNA(Glu) + NADP(+) = L-glutamyl-tRNA(Glu) + NADPH + H(+). It participates in porphyrin-containing compound metabolism; protoporphyrin-IX biosynthesis; 5-aminolevulinate from L-glutamyl-tRNA(Glu): step 1/2. Functionally, catalyzes the NADPH-dependent reduction of glutamyl-tRNA(Glu) to glutamate 1-semialdehyde (GSA). The chain is Glutamyl-tRNA reductase from Bacillus pumilus (strain SAFR-032).